We begin with the raw amino-acid sequence, 321 residues long: Lipoyl synthase (321 aa).

Positions 68, 73, 79, 94, 98, 101, and 308 each coordinate [4Fe-4S] cluster. In terms of domain architecture, Radical SAM core spans 80-297 (FNHGTATFMI…KALADELGFT (218 aa)).

This sequence belongs to the radical SAM superfamily. Lipoyl synthase family. [4Fe-4S] cluster is required as a cofactor.

Its subcellular location is the cytoplasm. It carries out the reaction [[Fe-S] cluster scaffold protein carrying a second [4Fe-4S](2+) cluster] + N(6)-octanoyl-L-lysyl-[protein] + 2 oxidized [2Fe-2S]-[ferredoxin] + 2 S-adenosyl-L-methionine + 4 H(+) = [[Fe-S] cluster scaffold protein] + N(6)-[(R)-dihydrolipoyl]-L-lysyl-[protein] + 4 Fe(3+) + 2 hydrogen sulfide + 2 5'-deoxyadenosine + 2 L-methionine + 2 reduced [2Fe-2S]-[ferredoxin]. It functions in the pathway protein modification; protein lipoylation via endogenous pathway; protein N(6)-(lipoyl)lysine from octanoyl-[acyl-carrier-protein]: step 2/2. Its function is as follows. Catalyzes the radical-mediated insertion of two sulfur atoms into the C-6 and C-8 positions of the octanoyl moiety bound to the lipoyl domains of lipoate-dependent enzymes, thereby converting the octanoylated domains into lipoylated derivatives. The protein is Lipoyl synthase of Shewanella oneidensis (strain ATCC 700550 / JCM 31522 / CIP 106686 / LMG 19005 / NCIMB 14063 / MR-1).